The following is a 107-amino-acid chain: ATP-dependent Clp protease adapter protein ClpS (107 aa).

The disordered stretch occupies residues 1–20 (MAQKHEHDTSVITESAPKQK).

This sequence belongs to the ClpS family. As to quaternary structure, binds to the N-terminal domain of the chaperone ClpA.

In terms of biological role, involved in the modulation of the specificity of the ClpAP-mediated ATP-dependent protein degradation. The sequence is that of ATP-dependent Clp protease adapter protein ClpS from Myxococcus xanthus (strain DK1622).